The primary structure comprises 838 residues: Ribonucleoside-diphosphate reductase large subunit (838 aa).

Positions 6-97 (KLVTKRDGSV…VTALHKTTTE (92 aa)) constitute an ATP-cone domain. Residues 10 to 11 (KR), 16 to 22 (EPYDEKV), T58, and D62 each bind ATP. S227 contributes to the GDP binding site. An intrachain disulfide couples C228 to C454. DTTP is bound by residues 236-238 (DSI), K253, R266, and 273-274 (AG). N437 contributes to the GDP binding site. N437 serves as the catalytic Proton acceptor. The active-site Cysteine radical intermediate is the C439. GDP-binding positions include E441 and 626 to 629 (TAST). E441 acts as the Proton acceptor in catalysis. Positions 780–794 (KELPKPDKQSKEEVH) are enriched in basic and acidic residues. The interval 780 to 838 (KELPKPDKQSKEEVHGSVGRGKRKRVGEKPTANHSNAGAPNLNGPPDTDGDGGCLNCGS) is disordered.

The protein belongs to the ribonucleoside diphosphate reductase large chain family. As to quaternary structure, heterodimer of a large and a small subunit.

The enzyme catalyses a 2'-deoxyribonucleoside 5'-diphosphate + [thioredoxin]-disulfide + H2O = a ribonucleoside 5'-diphosphate + [thioredoxin]-dithiol. It carries out the reaction dCDP + [thioredoxin]-disulfide + H2O = CDP + [thioredoxin]-dithiol. Under complex allosteric control mediated by deoxynucleoside triphosphates and ATP binding to separate specificity and activation sites on the large subunit. The type of nucleotide bound at the specificity site determines substrate preference. It seems probable that ATP makes the enzyme reduce CDP and UDP, dGTP favors ADP reduction and dTTP favors GDP reduction. Stimulated by ATP and inhibited by dATP binding to the activity site. Functionally, provides the precursors necessary for DNA synthesis. Catalyzes the rate limiting step in the de novo synthesis of deoxyribonucleotides by directly reducing ribonucleotides to the corresponding deoxyribonucleotides. The polypeptide is Ribonucleoside-diphosphate reductase large subunit (RNR1) (Trypanosoma brucei brucei).